We begin with the raw amino-acid sequence, 710 residues long: Solute carrier organic anion transporter family member 3A1 (710 aa).

Methionine 1 is modified (N-acetylmethionine). Residues 1-15 are compositionally biased toward gly residues; it reads MQGKKPGGSSGGGRS. The tract at residues 1 to 25 is disordered; it reads MQGKKPGGSSGGGRSGELQGDEAQR. At 1–40 the chain is on the cytoplasmic side; sequence MQGKKPGGSSGGGRSGELQGDEAQRNKKKKKKVSCFSNIK. Residues 41-60 traverse the membrane as a helical segment; the sequence is IFLVSECALMLAQGTVGAYL. Topologically, residues 61 to 79 are extracellular; it reads VSVLTTLERRFNLQSADVG. Residues 80–100 form a helical membrane-spanning segment; it reads VIASSFEIGNLALILFVSYFG. Residues 101–106 lie on the Cytoplasmic side of the membrane; it reads ARGHRP. Residues 107-131 traverse the membrane as a helical segment; that stretch reads RLIGCGGIVMALGALLSALPEFLTH. Topologically, residues 132 to 174 are extracellular; the sequence is QYKYEAGEIRWGAEGRDVCATNGSSSDEGPDPDLICRNRTATN. Residues asparagine 153 and asparagine 169 are each glycosylated (N-linked (GlcNAc...) asparagine). A helical transmembrane segment spans residues 175-203; the sequence is MMYLLLIGAQVLLGIGATPVQPLGVSYID. At 204–222 the chain is on the cytoplasmic side; it reads DHVRRKDSSLYIGILFTML. A helical transmembrane segment spans residues 223–243; sequence VFGPACGFILGSFCTKIYVDA. Over 244–261 the chain is Extracellular; it reads VFIDTSNLDITPDDPRWI. A helical membrane pass occupies residues 262–286; it reads GAWWGGFLLCGALLFFSSLLMFGFP. The Cytoplasmic segment spans residues 287-344; that stretch reads QSLPPHSDPGMESEQAMLPEREYERPKPSNGVLRHPLEPDSSASCFQQLRVIPKVTKH. The helical transmembrane segment at 345–366 threads the bilayer; that stretch reads LLSNPVFTCIVLAACMEIAVVA. At 367 to 386 the chain is on the extracellular side; sequence GFAAFLGKYLEQQFNLTTSS. An N-linked (GlcNAc...) asparagine glycan is attached at asparagine 381. A helical transmembrane segment spans residues 387-410; it reads ANQLLGMTAIPCACLGIFLGGLLV. Residues 411-414 are Cytoplasmic-facing; the sequence is KKLS. Residues 415 to 438 traverse the membrane as a helical segment; that stretch reads LSALGAIRMAMLVNLVSTACYVSF. Topologically, residues 439–539 are extracellular; that stretch reads LFLGCDTGPV…PGCQEAFLTF (101 aa). Asparagine 457 is a glycosylation site (N-linked (GlcNAc...) asparagine). One can recognise a Kazal-like domain in the interval 465-513; that stretch reads LDPYSPCNNNCECQTDSFTPVCGADGITYLSACFAGCNSTNLTGCACLT. 3 disulfide bridges follow: cysteine 471–cysteine 497, cysteine 475–cysteine 486, and cysteine 477–cysteine 501. 3 N-linked (GlcNAc...) asparagine glycosylation sites follow: asparagine 502, asparagine 505, and asparagine 519. Residues 540-562 form a helical membrane-spanning segment; sequence LCVMCVCSLIGAMAQTPSVIILI. At 563–571 the chain is on the cytoplasmic side; it reads RTVSPELKS. Residues 572-597 form a helical membrane-spanning segment; sequence YALGVLFLLLRLLGFIPPPLIFGAGI. Residues 598–630 are Extracellular-facing; sequence DSTCLFWSTFCGEQGACVLYDNVVYRYLYVSIA. A helical membrane pass occupies residues 631 to 648; the sequence is IALKSFAFILYTTTWQCL. The Cytoplasmic segment spans residues 649–705; it reads RKNYKRYIKNHEGGLSTSEFFASTLTLDNLGRDPVPAHQTHRTKFIYNLEDHEWCEN.

It belongs to the organo anion transporter (TC 2.A.60) family. In terms of tissue distribution, widely expressed.

It is found in the basolateral cell membrane. The protein localises to the apical cell membrane. The protein resides in the basal cell membrane. The catalysed reaction is L-thyroxine(out) = L-thyroxine(in). The enzyme catalyses prostaglandin E1(out) = prostaglandin E1(in). It carries out the reaction prostaglandin E2(out) = prostaglandin E2(in). It catalyses the reaction prostaglandin F2alpha(out) = prostaglandin F2alpha(in). The catalysed reaction is (5Z,8Z,11Z,14Z)-eicosatetraenoate(out) = (5Z,8Z,11Z,14Z)-eicosatetraenoate(in). The enzyme catalyses taurocholate(out) = taurocholate(in). It carries out the reaction glycocholate(out) = glycocholate(in). It catalyses the reaction estrone 3-sulfate(out) = estrone 3-sulfate(in). The catalysed reaction is argipressin(out) = argipressin(in). Putative organic anion antiporter with apparent broad substrate specificity. Recognizes various substrates including thyroid hormone L-thyroxine, prostanoids such as prostaglandin E1 and E2, bile acids such as taurocholate, glycolate and glycochenodeoxycholate and peptide hormones such as L-arginine vasopressin, likely operating in a tissue-specific manner. The transport mechanism, its electrogenicity and potential tissue-specific counterions remain to be elucidated. The polypeptide is Solute carrier organic anion transporter family member 3A1 (Slco3a1) (Mus musculus (Mouse)).